We begin with the raw amino-acid sequence, 248 residues long: Small ribosomal subunit protein uS3 (248 aa).

The KH type-2 domain maps to 38–106 (IREFLSEGLE…QVQLNILEVK (69 aa)). A compositionally biased stretch (basic and acidic residues) spans 214–229 (SLMNARDERPSRGGRR). Residues 214–248 (SLMNARDERPSRGGRRERPRRGGARRQRAEKKQEG) are disordered. Residues 230–242 (ERPRRGGARRQRA) show a composition bias toward basic residues.

It belongs to the universal ribosomal protein uS3 family. Part of the 30S ribosomal subunit. Forms a tight complex with proteins S10 and S14.

Functionally, binds the lower part of the 30S subunit head. Binds mRNA in the 70S ribosome, positioning it for translation. The sequence is that of Small ribosomal subunit protein uS3 from Corynebacterium urealyticum (strain ATCC 43042 / DSM 7109).